Reading from the N-terminus, the 314-residue chain is tRNA selenocysteine 1-associated protein 1 (314 aa).

RRM domains lie at 2–85 and 94–173; these read NSLW…RSNY and FSLF…LASS.

Belongs to the RRM TRSPAP family.

The protein resides in the nucleus. Its subcellular location is the cytoplasm. Involved in the early steps of selenocysteine biosynthesis and tRNA(Sec) charging to the later steps resulting in the cotranslational incorporation of selenocysteine into selenoproteins. This chain is tRNA selenocysteine 1-associated protein 1, found in Danio rerio (Zebrafish).